The chain runs to 104 residues: MAGKAHRLNAEEREQLLPNLRAVGWNEVEGRDAIFKEFHFKDFNRAFGFMTRVALQAEKLDHHPEWFNVYNKVHITLSTHECTGLSERDINLASFIEQVAASLS.

Residue Ala2 is modified to N-acetylalanine. Substrate is bound by residues 61 to 63 (DHH) and 78 to 81 (STHE).

The protein belongs to the pterin-4-alpha-carbinolamine dehydratase family. As to quaternary structure, homotetramer and homodimer. The major tissues expressing cDcoH are hypothalamus, kidney and liver.

It is found in the cytoplasm. It localises to the nucleus. It catalyses the reaction (4aS,6R)-4a-hydroxy-L-erythro-5,6,7,8-tetrahydrobiopterin = (6R)-L-erythro-6,7-dihydrobiopterin + H2O. Involved in tetrahydrobiopterin biosynthesis. Seems to both prevent the formation of 7-pterins and accelerate the formation of quinonoid-BH2. Coactivator for HNF1A-dependent transcription. Regulates the dimerization of homeodomain protein HNF1A and enhances its transcriptional activity. Also acts as a coactivator for HNF1B-dependent transcription. In Gallus gallus (Chicken), this protein is Pterin-4-alpha-carbinolamine dehydratase (PCBD1).